A 222-amino-acid polypeptide reads, in one-letter code: UPF0128 protein PYRAB08320 (222 aa).

Belongs to the UPF0128 family.

This is UPF0128 protein PYRAB08320 from Pyrococcus abyssi (strain GE5 / Orsay).